A 520-amino-acid chain; its full sequence is GMP synthase [glutamine-hydrolyzing] (520 aa).

A Glutamine amidotransferase type-1 domain is found at 12-205 (KIIVLDYGSQ…AISICGARGD (194 aa)). Cysteine 89 serves as the catalytic Nucleophile. Residues histidine 179 and glutamate 181 contribute to the active site. A GMPS ATP-PPase domain is found at 206–395 (WSMDNFIDME…LGMPEEIVWR (190 aa)). 233–239 (SGGVDSS) contributes to the ATP binding site.

In terms of assembly, homodimer.

The enzyme catalyses XMP + L-glutamine + ATP + H2O = GMP + L-glutamate + AMP + diphosphate + 2 H(+). It participates in purine metabolism; GMP biosynthesis; GMP from XMP (L-Gln route): step 1/1. Catalyzes the synthesis of GMP from XMP. In Streptococcus pyogenes serotype M3 (strain SSI-1), this protein is GMP synthase [glutamine-hydrolyzing].